Consider the following 119-residue polypeptide: Holo-[acyl-carrier-protein] synthase (119 aa).

Aspartate 7 and glutamate 53 together coordinate Mg(2+).

This sequence belongs to the P-Pant transferase superfamily. AcpS family. Mg(2+) serves as cofactor.

It localises to the cytoplasm. It catalyses the reaction apo-[ACP] + CoA = holo-[ACP] + adenosine 3',5'-bisphosphate + H(+). Transfers the 4'-phosphopantetheine moiety from coenzyme A to a Ser of acyl-carrier-protein. The polypeptide is Holo-[acyl-carrier-protein] synthase (Dehalococcoides mccartyi (strain CBDB1)).